Consider the following 216-residue polypeptide: Glycerol-3-phosphate acyltransferase 3 (216 aa).

A run of 5 helical transmembrane segments spans residues 6 to 26, 58 to 78, 92 to 112, 125 to 145, and 158 to 178; these read LLLV…YLVS, LVAA…GLVI, ILFA…WPVF, FGGM…VLII, and ITGV…SGFP.

This sequence belongs to the PlsY family. In terms of assembly, probably interacts with PlsX.

It is found in the cell membrane. It catalyses the reaction an acyl phosphate + sn-glycerol 3-phosphate = a 1-acyl-sn-glycero-3-phosphate + phosphate. Its pathway is lipid metabolism; phospholipid metabolism. Catalyzes the transfer of an acyl group from acyl-phosphate (acyl-PO(4)) to glycerol-3-phosphate (G3P) to form lysophosphatidic acid (LPA). This enzyme utilizes acyl-phosphate as fatty acyl donor, but not acyl-CoA or acyl-ACP. The protein is Glycerol-3-phosphate acyltransferase 3 of Dehalococcoides mccartyi (strain ATCC BAA-2266 / KCTC 15142 / 195) (Dehalococcoides ethenogenes (strain 195)).